The primary structure comprises 113 residues: Kita-kyushu lung cancer antigen 1 (113 aa).

Residues 1-3 (MNF) lie on the Cytoplasmic side of the membrane. The helical; Signal-anchor for type II membrane protein transmembrane segment at 4–21 (YLLLASSILCALIVFWKY) threads the bilayer. Residues 22 to 113 (RRFQRNTGEM…RGASPHRKST (92 aa)) are Extracellular-facing. N-linked (GlcNAc...) asparagine glycosylation is present at Asn83.

Specifically expressed in testis. Expressed by cancer cell lines.

The protein localises to the cell membrane. The polypeptide is Kita-kyushu lung cancer antigen 1 (CT83) (Homo sapiens (Human)).